A 962-amino-acid polypeptide reads, in one-letter code: RNA-binding protein 15 (962 aa).

Composition is skewed to basic and acidic residues over residues Met1–Pro10, Leu34–Pro52, and Arg59–Lys72. The tract at residues Met1–Glu167 is disordered. Low complexity predominate over residues Gly82–Arg94. Over residues Leu97 to Glu112 the composition is skewed to basic and acidic residues. Ser108 is subject to Phosphoserine. Over residues Ser118–Ser129 the composition is skewed to low complexity. Over residues Ser134–Glu149 the composition is skewed to gly residues. The segment covering Ser150–Ala159 has biased composition (low complexity). The RRM 1 domain occupies Lys169–Val251. 3 positions are modified to phosphoserine: Ser178, Ser207, and Ser209. A Glycyl lysine isopeptide (Lys-Gly) (interchain with G-Cter in SUMO2) cross-link involves residue Lys245. Phosphoserine occurs at positions 252, 256, and 258. The disordered stretch occupies residues Arg257–Ala297. Tyr265 is subject to Phosphotyrosine. A compositionally biased stretch (low complexity) spans Ser268–Gly277. Phosphoserine is present on residues Ser291, Ser293, and Ser364. RRM domains lie at Arg373–Ala450 and Thr454–Thr528. Glycyl lysine isopeptide (Lys-Gly) (interchain with G-Cter in SUMO2) cross-links involve residues Lys405, Lys419, and Lys444. An N6-acetyllysine modification is found at Lys449. 2 stretches are compositionally biased toward basic and acidic residues: residues Gly553 to Tyr580 and Ser612 to Pro661. Residues Gly553 to Ala779 form a disordered region. Thr567 carries the phosphothreonine modification. Arg577 is modified (asymmetric dimethylarginine; alternate; by PRMT1). Arg577 is modified (omega-N-methylarginine; alternate; by PRMT1). Ser621, Ser655, Ser670, Ser674, and Ser701 each carry phosphoserine. 3 stretches are compositionally biased toward basic and acidic residues: residues Arg673 to Ser692, Ser701 to Asp729, and Asn742 to Asp751. Lys745 is covalently cross-linked (Glycyl lysine isopeptide (Lys-Gly) (interchain with G-Cter in SUMO2)). Residues Ala754–Gln771 are compositionally biased toward low complexity. Phosphoserine is present on residues Ser768 and Ser782. The SPOC domain occupies Val778–Lys957. The interval Gly866–Thr885 is disordered. Residues Ser867–Thr885 are compositionally biased toward low complexity. Ser936 bears the Phosphoserine mark.

It belongs to the RRM Spen family. As to quaternary structure, component of the WMM complex, a N6-methyltransferase complex composed of a catalytic subcomplex, named MAC, and of an associated subcomplex, named MACOM. The MAC subcomplex is composed of METTL3 and METTL14. The MACOM subcomplex is composed of WTAP, ZC3H13, CBLL1/HAKAI, VIRMA, and, in some cases of RBM15 (RBM15 or RBM15B). Also a component of a MACOM-like complex, named WTAP complex, composed of WTAP, ZC3H13, CBLL1, VIRMA, RBM15, BCLAF1 and THRAP3. Interacts with RBPJ. Interacts (via SPOC domain) with SETD1B. Interacts with NXF1, the interaction is required to promote mRNA export. Interacts with SF3B1. Post-translationally, methylated at Arg-577 by PRMT1, leading to promote ubiquitination by CNOT4 and subsequent degradation by the proteasome. Ubiquitinated by CNOT4 following methylation at Arg-577 by PRMT1.

It localises to the nucleus speckle. It is found in the nucleus. The protein resides in the nucleoplasm. The protein localises to the nucleus envelope. Its subcellular location is the nucleus membrane. RNA-binding protein that acts as a key regulator of N6-methyladenosine (m6A) methylation of RNAs, thereby regulating different processes, such as hematopoietic cell homeostasis, alternative splicing of mRNAs and X chromosome inactivation mediated by Xist RNA. Associated component of the WMM complex, a complex that mediates N6-methyladenosine (m6A) methylation of RNAs, a modification that plays a role in the efficiency of mRNA splicing and RNA processing. Plays a key role in m6A methylation, possibly by binding target RNAs and recruiting the WMM complex. Involved in random X inactivation mediated by Xist RNA: acts by binding Xist RNA and recruiting the WMM complex, which mediates m6A methylation, leading to target YTHDC1 reader on Xist RNA and promoting transcription repression activity of Xist. Required for the development of multiple tissues, such as the maintenance of the homeostasis of long-term hematopoietic stem cells and for megakaryocyte (MK) and B-cell differentiation. Regulates megakaryocyte differentiation by regulating alternative splicing of genes important for megakaryocyte differentiation; probably regulates alternative splicing via m6A regulation. Required for placental vascular branching morphogenesis and embryonic development of the heart and spleen. Acts as a regulator of thrombopoietin response in hematopoietic stem cells by regulating alternative splicing of MPL. May also function as an mRNA export factor, stimulating export and expression of RTE-containing mRNAs which are present in many retrotransposons that require to be exported prior to splicing. High affinity binding of pre-mRNA to RBM15 may allow targeting of the mRNP to the export helicase DBP5 in a manner that is independent of splicing-mediated NXF1 deposition, resulting in export prior to splicing. May be implicated in HOX gene regulation. The chain is RNA-binding protein 15 from Mus musculus (Mouse).